Consider the following 278-residue polypeptide: MPIAPSTYYDHINREPSRRELRDGELKEHISRVHAANYGVYGARKVWLTLNREGIEVARCTVERLMTKLGLSGTTRGKARRTTIADPATARPADLVQRRFGPPAPNRLWVADLTYVSTWAGFAYVAFVTDAYARRILGWRVASTMATSMVLDAIEQAIWTRQQESVLDLKDVIHHTDRGSQYTSIRFSERLAEAGIQPSVGAVGSSYDNALAETINGLYKTELIKPGKPWRSIEDVELATARWVDWFNHRRLYQYCGDVPPVELEAAYYAQRQRPAAG.

The 168-residue stretch at 101 to 268 (GPPAPNRLWV…VPPVELEAAY (168 aa)) folds into the Integrase catalytic domain.

Involved in the transposition of the insertion sequence. The protein is Putative transposase for insertion sequence element IS986/IS6110 of Mycobacterium tuberculosis (strain CDC 1551 / Oshkosh).